Reading from the N-terminus, the 328-residue chain is D-cysteine desulfhydrase (328 aa).

K51 carries the N6-(pyridoxal phosphate)lysine modification.

Belongs to the ACC deaminase/D-cysteine desulfhydrase family. In terms of assembly, homodimer. Pyridoxal 5'-phosphate serves as cofactor.

It catalyses the reaction D-cysteine + H2O = hydrogen sulfide + pyruvate + NH4(+) + H(+). Catalyzes the alpha,beta-elimination reaction of D-cysteine and of several D-cysteine derivatives. It could be a defense mechanism against D-cysteine. The sequence is that of D-cysteine desulfhydrase from Salmonella paratyphi A (strain AKU_12601).